The primary structure comprises 329 residues: tRNA pseudouridine synthase B (329 aa).

Asp-42 serves as the catalytic Nucleophile.

It belongs to the pseudouridine synthase TruB family. Type 1 subfamily.

It carries out the reaction uridine(55) in tRNA = pseudouridine(55) in tRNA. Its function is as follows. Responsible for synthesis of pseudouridine from uracil-55 in the psi GC loop of transfer RNAs. The polypeptide is tRNA pseudouridine synthase B (Lactococcus lactis subsp. lactis (strain IL1403) (Streptococcus lactis)).